We begin with the raw amino-acid sequence, 86 residues long: Muscarinic toxin-like protein (86 aa).

Residues 1–21 (MKTLLLTLAVVTMVCMDLGYT) form the signal peptide. 4 disulfide bridges follow: Cys24–Cys45, Cys38–Cys62, Cys66–Cys78, and Cys79–Cys84.

It belongs to the three-finger toxin family. Short-chain subfamily. Orphan group VIII (haditoxin) sub-subfamily. Homodimer; non-covalently linked. As to expression, expressed by the venom gland.

It localises to the secreted. Its function is as follows. Antagonist of muscle and neuronal nicotinic acetylcholine receptors (nAChR) with highest affinity for neuronal alpha-7/CHRNA7 nAChRs. The sequence is that of Muscarinic toxin-like protein from Bungarus multicinctus (Many-banded krait).